The primary structure comprises 152 residues: uncharacterized protein (152 aa).

Residues 12-34 (ALLYLGGGLLAMIYGLITFFMAF) traverse the membrane as a helical segment.

It to B.subtilis YfjD.

It localises to the membrane. This is an uncharacterized protein from Bacillus subtilis (strain 168).